Reading from the N-terminus, the 334-residue chain is Hematopoietic SH2 domain-containing protein (334 aa).

An SH2 domain is found at 34–125 (WFHGTISREA…PFGELLTQAC (92 aa)). Disordered stretches follow at residues 157 to 181 (EVQR…KGEF) and 254 to 280 (EDSC…ATFR). Polar residues predominate over residues 258-267 (AATTSLQNPA).

As to quaternary structure, interacts with FES and TNK2. May be phosphorylated by FES and ACK1. In terms of tissue distribution, predominantly expressed in spleen and thymus. Appears not to be expressed in heart, brain, liver, kidney, embryo, lung and ovary.

The protein resides in the cytoplasm. Its subcellular location is the mitochondrion. Functionally, adapter protein involved in tyrosine kinase and CD28 signaling. May be a modulator of the apoptotic response through its ability to affect mitochondrial stability. This Mus musculus (Mouse) protein is Hematopoietic SH2 domain-containing protein (Hsh2d).